Reading from the N-terminus, the 615-residue chain is Putative binding protein BruAb2_0648 (615 aa).

The N-terminal stretch at 1 to 29 is a signal peptide; the sequence is MLNRFIAFFRSVFLIGLVATAFGALPARA.

Belongs to the bacterial solute-binding protein 5 family.

The protein resides in the periplasm. This is Putative binding protein BruAb2_0648 from Brucella abortus biovar 1 (strain 9-941).